The primary structure comprises 101 residues: Urease subunit beta (101 aa).

Belongs to the urease beta subunit family. As to quaternary structure, heterotrimer of UreA (gamma), UreB (beta) and UreC (alpha) subunits. Three heterotrimers associate to form the active enzyme.

Its subcellular location is the cytoplasm. It carries out the reaction urea + 2 H2O + H(+) = hydrogencarbonate + 2 NH4(+). Its pathway is nitrogen metabolism; urea degradation; CO(2) and NH(3) from urea (urease route): step 1/1. This Bradyrhizobium sp. (strain ORS 278) protein is Urease subunit beta.